A 408-amino-acid chain; its full sequence is Argininosuccinate synthase (408 aa).

Residues 16–24 (AYSGGLDTS) and A44 each bind ATP. L-citrulline contacts are provided by Y96 and S101. Position 126 (G126) interacts with ATP. L-aspartate contacts are provided by T128, N132, and D133. N132 contacts L-citrulline. Residues R136, S185, S194, E270, and Y282 each contribute to the L-citrulline site.

Belongs to the argininosuccinate synthase family. Type 1 subfamily. In terms of assembly, homotetramer.

The protein localises to the cytoplasm. It catalyses the reaction L-citrulline + L-aspartate + ATP = 2-(N(omega)-L-arginino)succinate + AMP + diphosphate + H(+). It participates in amino-acid biosynthesis; L-arginine biosynthesis; L-arginine from L-ornithine and carbamoyl phosphate: step 2/3. The polypeptide is Argininosuccinate synthase (Shewanella woodyi (strain ATCC 51908 / MS32)).